A 484-amino-acid chain; its full sequence is Cobyric acid synthase (484 aa).

Residues 249–438 form the GATase cobBQ-type domain; that stretch reads QLRVAVPVFT…LHGIFDRPET (190 aa). The Nucleophile role is filled by Cys330. The active site involves His430.

The protein belongs to the CobB/CobQ family. CobQ subfamily.

The protein operates within cofactor biosynthesis; adenosylcobalamin biosynthesis. Functionally, catalyzes amidations at positions B, D, E, and G on adenosylcobyrinic A,C-diamide. NH(2) groups are provided by glutamine, and one molecule of ATP is hydrogenolyzed for each amidation. The sequence is that of Cobyric acid synthase from Vibrio cholerae serotype O1 (strain ATCC 39541 / Classical Ogawa 395 / O395).